A 255-amino-acid polypeptide reads, in one-letter code: Pyrroloquinoline-quinone synthase (255 aa).

The protein belongs to the PqqC family.

It carries out the reaction 6-(2-amino-2-carboxyethyl)-7,8-dioxo-1,2,3,4,7,8-hexahydroquinoline-2,4-dicarboxylate + 3 O2 = pyrroloquinoline quinone + 2 H2O2 + 2 H2O + H(+). It participates in cofactor biosynthesis; pyrroloquinoline quinone biosynthesis. Functionally, ring cyclization and eight-electron oxidation of 3a-(2-amino-2-carboxyethyl)-4,5-dioxo-4,5,6,7,8,9-hexahydroquinoline-7,9-dicarboxylic-acid to PQQ. This Cereibacter sphaeroides (strain ATCC 17025 / ATH 2.4.3) (Rhodobacter sphaeroides) protein is Pyrroloquinoline-quinone synthase.